The chain runs to 113 residues: Hydrogenase maturation factor HypA (113 aa).

A Ni(2+)-binding site is contributed by histidine 2. Cysteine 73, cysteine 76, cysteine 89, and cysteine 92 together coordinate Zn(2+).

This sequence belongs to the HypA/HybF family.

In terms of biological role, involved in the maturation of [NiFe] hydrogenases. Required for nickel insertion into the metal center of the hydrogenase. In Chlorobium phaeobacteroides (strain BS1), this protein is Hydrogenase maturation factor HypA.